The following is a 706-amino-acid chain: Acyl-coenzyme A oxidase (706 aa).

The segment at 682–706 (MLNRPSKEERERFEKSTETAKILSK) is disordered. Residues 686-699 (PSKEERERFEKSTE) show a composition bias toward basic and acidic residues.

It belongs to the acyl-CoA oxidase family. Requires FAD as cofactor.

The protein localises to the peroxisome. The catalysed reaction is a 2,3-saturated acyl-CoA + O2 = a (2E)-enoyl-CoA + H2O2. It participates in lipid metabolism; peroxisomal fatty acid beta-oxidation. The protein is Acyl-coenzyme A oxidase (POX1) of Debaryomyces hansenii (strain ATCC 36239 / CBS 767 / BCRC 21394 / JCM 1990 / NBRC 0083 / IGC 2968) (Yeast).